The following is a 267-amino-acid chain: Tryptophan synthase alpha chain (267 aa).

Residues Glu-49 and Asp-60 each act as proton acceptor in the active site.

Belongs to the TrpA family. As to quaternary structure, tetramer of two alpha and two beta chains.

It catalyses the reaction (1S,2R)-1-C-(indol-3-yl)glycerol 3-phosphate + L-serine = D-glyceraldehyde 3-phosphate + L-tryptophan + H2O. The protein operates within amino-acid biosynthesis; L-tryptophan biosynthesis; L-tryptophan from chorismate: step 5/5. Functionally, the alpha subunit is responsible for the aldol cleavage of indoleglycerol phosphate to indole and glyceraldehyde 3-phosphate. The chain is Tryptophan synthase alpha chain from Acaryochloris marina (strain MBIC 11017).